Consider the following 2097-residue polypeptide: 1-phosphatidylinositol 3-phosphate 5-kinase (2097 aa).

A disordered region spans residues 1–44; that stretch reads MATDDKSSPTLDSANDLPRSPASPSHLTHFKPLTPDQDEPPFKS. N-acetylalanine is present on Ala-2. Phosphoserine; by autocatalysis occurs at positions 23 and 48. A disordered region spans residues 56–122; sequence NKERGEGGQG…AEPACGGHDP (67 aa). Low complexity predominate over residues 66-81; sequence EQQSPSSSWASPQIPS. Residue Ser-88 is modified to Phosphoserine. Residues 158 to 218 form an FYVE-type zinc finger; sequence DSQCKECYDC…ACTYCRKIAL (61 aa). 8 residues coordinate Zn(2+): Cys-164, Cys-167, Cys-180, Cys-183, Cys-188, Cys-191, Cys-210, and Cys-213. 3 positions are modified to phosphoserine: Ser-299, Ser-307, and Ser-312. Ser-318 is modified (phosphoserine; by PKB/AKT1 or PKB/AKT2). Ser-329 is subject to Phosphoserine. One can recognise a DEP domain in the interval 365 to 440; the sequence is HTSGMEFQDH…DEYALYRPLQ (76 aa). Positions 442-459 are enriched in polar residues; sequence TEFSETPSPDSDSVNSVE. The disordered stretch occupies residues 442–469; the sequence is TEFSETPSPDSDSVNSVEGHSEPSWFKD. A compositionally biased stretch (basic and acidic residues) spans 460 to 469; sequence GHSEPSWFKD. Ser-475 carries the phosphoserine modification. Residues 484-505 form a disordered region; the sequence is GDDNLANSASPSKRTSVSSFQS. A compositionally biased stretch (polar residues) spans 488-505; that stretch reads LANSASPSKRTSVSSFQS. Residues 616 to 868 are chaperonin-like domain; the sequence is MMALLQQLLQ…MICVAYHSQL (253 aa). Disordered regions lie at residues 895-928, 989-1022, 1171-1194, and 1511-1555; these read GRGE…EDST, AVGN…QDDT, HSKD…EERG, and FQQE…HNGE. The segment covering 902–912 has biased composition (polar residues); the sequence is SQEQVSGSSLP. Positions 1175-1184 are enriched in polar residues; that stretch reads ASCTSGGKSG. Basic and acidic residues predominate over residues 1185-1194; that stretch reads NKTESDEERG. Ser-1543 and Ser-1548 each carry phosphoserine. Ser-1668 is modified (phosphoserine; by autocatalysis). Residues 1697–1742 form a disordered region; that stretch reads EGLPANSALDNRPKSSSPIRLPEISGGQTNRTVEAEPQPTKKASGM. Ser-1753 is modified (phosphoserine). The PIPK domain maps to 1757–2083; the sequence is SSQKRETLRG…RFCEAMDKYF (327 aa). Positions 1781 to 1800 are disordered; it reads GLESQGLEPQDEVDGGDTQK. Positions 1841-2097 are catalytic; that stretch reads EEEFIRSLSH…DHWTGLDLNC (257 aa). Phosphoserine; by autocatalysis occurs at positions 1968 and 2052.

As to quaternary structure, component of the PI(3,5)P2 regulatory complex/PAS complex, at least composed of PIKFYVE, FIG4 and VAC14. VAC14 nucleates the assembly of the complex and serves as a scaffold by pentamerizing into a star-shaped structure, which can bind a single copy each of PIKFYVE and FIG4 and coordinates their activities. Interacts (via chaperonin-like domain) with RABEPK; the interaction recruits RABEPK to the endosomal membrane. Interacts with SPAG9. Interacts with EGFR. Mn(2+) serves as cofactor. Post-translationally, phosphorylated in response to insulin at Ser-318 in a protein kinase B (PKB)-dependent manner. Autophosphorylates which down-regulates lipid product formation. In terms of processing, autophosphorylates which inhibits its own phosphatidylinositol 3-phosphate 5-kinase activity, stimulates FIG4 lipid phosphatase activity and down-regulates lipid product formation. Dephosphorylated by FIG4 in the PI(3,5)P2 regulatory complex, at Ser-48, Ser-1668 and Ser-2052. Phosphorylated in response to insulin at Ser-318 in a protein kinase B (PKB)-dependent manner. Ubiquitous.

It localises to the endosome membrane. It is found in the early endosome membrane. Its subcellular location is the cytoplasmic vesicle. The protein localises to the phagosome membrane. The protein resides in the late endosome membrane. The enzyme catalyses a 1,2-diacyl-sn-glycero-3-phospho-(1D-myo-inositol-3-phosphate) + ATP = a 1,2-diacyl-sn-glycero-3-phospho-(1D-myo-inositol-3,5-bisphosphate) + ADP + H(+). It carries out the reaction a 1,2-diacyl-sn-glycero-3-phospho-(1D-myo-inositol) + ATP = a 1,2-diacyl-sn-glycero-3-phospho-(1D-myo-inositol-5-phosphate) + ADP + H(+). It catalyses the reaction L-seryl-[protein] + ATP = O-phospho-L-seryl-[protein] + ADP + H(+). Its activity is regulated as follows. Inhibited by apilimod and YM201636. Dual specificity kinase implicated in myriad essential cellular processes such as maintenance of endomembrane homeostasis, and endocytic-vacuolar pathway, lysosomal trafficking, nuclear transport, stress- or hormone-induced signaling and cell cycle progression. The PI(3,5)P2 regulatory complex regulates both the synthesis and turnover of phosphatidylinositol 3,5-bisphosphate (PtdIns(3,5)P2). Sole enzyme to catalyze the phosphorylation of phosphatidylinositol 3-phosphate on the fifth hydroxyl of the myo-inositol ring, to form (PtdIns(3,5)P2). Also catalyzes the phosphorylation of phosphatidylinositol on the fifth hydroxyl of the myo-inositol ring, to form phosphatidylinositol 5-phosphate (PtdIns(5)P). Has serine-protein kinase activity and is able to autophosphorylate and transphosphorylate. Autophosphorylation inhibits its own phosphatidylinositol 3-phosphate 5-kinase activity, stimulates FIG4 lipid phosphatase activity and down-regulates lipid product formation. Involved in key endosome operations such as fission and fusion in the course of endosomal cargo transport. Required for the maturation of early into late endosomes, phagosomes and lysosomes. Regulates vacuole maturation and nutrient recovery following engulfment of macromolecules, initiates the redistribution of accumulated lysosomal contents back into the endosome network. Critical regulator of the morphology, degradative activity, and protein turnover of the endolysosomal system in macrophages and platelets. In neutrophils, critical to perform chemotaxis, generate ROS, and undertake phagosome fusion with lysosomes. Plays a key role in the processing and presentation of antigens by major histocompatibility complex class II (MHC class II) mediated by CTSS. Regulates melanosome biogenesis by controlling the delivery of proteins from the endosomal compartment to the melanosome. Essential for systemic glucose homeostasis, mediates insulin-induced signals for endosome/actin remodeling in the course of GLUT4 translocation/glucose uptake activation. Supports microtubule-based endosome-to-trans-Golgi network cargo transport, trhough association with SPAG9 and RABEPK. Mediates EGFR trafficking to the nucleus. The protein is 1-phosphatidylinositol 3-phosphate 5-kinase of Mus musculus (Mouse).